A 128-amino-acid polypeptide reads, in one-letter code: Large ribosomal subunit protein eL22 (128 aa).

The protein belongs to the eukaryotic ribosomal protein eL22 family. In terms of assembly, component of the large ribosomal subunit.

It localises to the cytoplasm. Its function is as follows. Component of the large ribosomal subunit. The ribosome is a large ribonucleoprotein complex responsible for the synthesis of proteins in the cell. The chain is Large ribosomal subunit protein eL22 (rpl22) from Ictalurus punctatus (Channel catfish).